We begin with the raw amino-acid sequence, 215 residues long: Reticulon-like protein B14 (215 aa).

The 181-residue stretch at 31–211 (FADIMFWKNK…NKIPKAQAKT (181 aa)) folds into the Reticulon domain. Helical transmembrane passes span 41–61 (KESG…EVVE), 62–82 (YPFI…FLIW), and 141–161 (LWIL…YIVF).

It is found in the endoplasmic reticulum membrane. The protein is Reticulon-like protein B14 (RTNLB14) of Arabidopsis thaliana (Mouse-ear cress).